A 126-amino-acid chain; its full sequence is MGPMGFVAVGVGAAVGAWLRWFFSVTWNAINPALPYGTLASNLVGGYLIGLAVAFFETHPSLPPEWRLLAVTGFLGGLTTFSTFSSEVIANLMAGDYRWAMLHLAMHLGGSLLLTAFGIWSYRALA.

The next 4 membrane-spanning stretches (helical) occupy residues 5-25, 36-56, 69-89, and 99-119; these read GFVAVGVGAAVGAWLRWFFSV, YGTLASNLVGGYLIGLAVAFF, LAVTGFLGGLTTFSTFSSEVI, and WAMLHLAMHLGGSLLLTAFGI. Residues G76 and T79 each coordinate Na(+).

The protein belongs to the fluoride channel Fluc/FEX (TC 1.A.43) family.

The protein localises to the cell inner membrane. It carries out the reaction fluoride(in) = fluoride(out). Its activity is regulated as follows. Na(+) is not transported, but it plays an essential structural role and its presence is essential for fluoride channel function. Functionally, fluoride-specific ion channel. Important for reducing fluoride concentration in the cell, thus reducing its toxicity. The polypeptide is Fluoride-specific ion channel FluC (Cupriavidus metallidurans (strain ATCC 43123 / DSM 2839 / NBRC 102507 / CH34) (Ralstonia metallidurans)).